Reading from the N-terminus, the 114-residue chain is uncharacterized protein (114 aa).

Fe cation contacts are provided by Cys40, Cys106, and Cys108.

The protein belongs to the HesB/IscA family. Ycf83 subfamily.

It localises to the plastid. The protein localises to the chloroplast. This is an uncharacterized protein from Pyropia yezoensis (Susabi-nori).